Here is a 179-residue protein sequence, read N- to C-terminus: Large ribosomal subunit protein uL6 (179 aa).

It belongs to the universal ribosomal protein uL6 family. Part of the 50S ribosomal subunit.

Its function is as follows. This protein binds to the 23S rRNA, and is important in its secondary structure. It is located near the subunit interface in the base of the L7/L12 stalk, and near the tRNA binding site of the peptidyltransferase center. The polypeptide is Large ribosomal subunit protein uL6 (Persephonella marina (strain DSM 14350 / EX-H1)).